The chain runs to 132 residues: Ribosome-binding factor A (132 aa).

It belongs to the RbfA family. Monomer. Binds 30S ribosomal subunits, but not 50S ribosomal subunits or 70S ribosomes.

It localises to the cytoplasm. In terms of biological role, one of several proteins that assist in the late maturation steps of the functional core of the 30S ribosomal subunit. Associates with free 30S ribosomal subunits (but not with 30S subunits that are part of 70S ribosomes or polysomes). Required for efficient processing of 16S rRNA. May interact with the 5'-terminal helix region of 16S rRNA. This chain is Ribosome-binding factor A, found in Rhizorhabdus wittichii (strain DSM 6014 / CCUG 31198 / JCM 15750 / NBRC 105917 / EY 4224 / RW1) (Sphingomonas wittichii).